A 122-amino-acid chain; its full sequence is Large ribosomal subunit protein uL14 (122 aa).

Belongs to the universal ribosomal protein uL14 family. In terms of assembly, part of the 50S ribosomal subunit. Forms a cluster with proteins L3 and L19. In the 70S ribosome, L14 and L19 interact and together make contacts with the 16S rRNA in bridges B5 and B8.

In terms of biological role, binds to 23S rRNA. Forms part of two intersubunit bridges in the 70S ribosome. This Shewanella woodyi (strain ATCC 51908 / MS32) protein is Large ribosomal subunit protein uL14.